The chain runs to 244 residues: Chaperone protein FimB/FhaD (244 aa).

The N-terminal stretch at 1–24 is a signal peptide; that stretch reads MARWRRRLGVAALGAAMLASLAPA.

It belongs to the periplasmic pilus chaperone family.

The protein localises to the periplasm. Functionally, required for the biogenesis of the filamentous hemagglutinin and the fimbria. This chain is Chaperone protein FimB/FhaD (fimB), found in Bordetella pertussis (strain Tohama I / ATCC BAA-589 / NCTC 13251).